We begin with the raw amino-acid sequence, 545 residues long: Glucans biosynthesis protein G (545 aa).

The N-terminal stretch at 1–34 (MVSLLRCQSFKPSSSLICSLALSAAFALSSSAFA) is a signal peptide. A disordered region spans residues 38 to 60 (KPAENKPATPVVSPPKATAQPAN).

It belongs to the OpgD/OpgG family.

It localises to the periplasm. It participates in glycan metabolism; osmoregulated periplasmic glucan (OPG) biosynthesis. Functionally, involved in the biosynthesis of osmoregulated periplasmic glucans (OPGs). This is Glucans biosynthesis protein G from Shewanella sp. (strain MR-7).